Consider the following 556-residue polypeptide: Peptide chain release factor 3 (556 aa).

The region spanning Gln-28–Gly-297 is the tr-type G domain. GTP is bound by residues Ser-37–Thr-44, Asp-105–His-109, and Asn-159–Asp-162.

Belongs to the TRAFAC class translation factor GTPase superfamily. Classic translation factor GTPase family. PrfC subfamily.

The protein resides in the cytoplasm. In terms of biological role, increases the formation of ribosomal termination complexes and stimulates activities of RF-1 and RF-2. It binds guanine nucleotides and has strong preference for UGA stop codons. It may interact directly with the ribosome. The stimulation of RF-1 and RF-2 is significantly reduced by GTP and GDP, but not by GMP. This is Peptide chain release factor 3 from Synechococcus sp. (strain ATCC 27144 / PCC 6301 / SAUG 1402/1) (Anacystis nidulans).